A 718-amino-acid chain; its full sequence is MASSGEDISNDDDDMHPAAAGMADGVHLLGFSDEILLHILSHVPSTDLILNVRRTCRKLAALCLDKSLIHTVLLQKDYQASEDKVRQLVKEIGREIQQLSMAGCYWLPGSTVEHVARCRSLVKVNLSGCHLTSLRLSKMLSALQHLRSLAIDVSPGFDASQLSSECKATLSRVRELKQTLFTPSYGVVPCCTSLEKLLLYFEILDRTREGAILSGQLMVGQSNVPHYQNLRVFYARLAPGYINQEVVRLYLAVLSDRTPQNLHAFLISVPGSFAESGATKNLLDSMARNVVLDALQLPKSWLNGSSLLQHMKFNNPFYFSFSRCTLSGGHLIQQVINGGKDLRSLASLNLSGCVHCLSPDSLLRKAEDDIDSSILETLVASCCNLRHLNLSAAHHHSSEGLGRHLCQLLARLRHLRSLSLPVCSVADSAPRADRAPAQPAMHAVPRGFGKKVRVGVQSCPSPFSGQACPQPSSVFWSLLKNLPFLEHLELIGSNFSSAMPRNEPAIRNSLPPCSRAQSVGDSEVAAIGQLAFLRHLTLAQLPSVLTGSGLVNIGLQCQQLRSLSLANLGMMGKVVYMPALSDMLKHCKRLRDLRLEQPYFSANAQFFQALSQCPSLQRLCLVSRSGTLQPDAVLAFMARCLQVVMCHLFTGESLATCKSLQQSLLRSFQAERPALNVVIFPLLHEGLTDVIRDVPLVHLDEITLFKSRVAEEPPNLWW.

The F-box domain maps to 25-72 (GVHLLGFSDEILLHILSHVPSTDLILNVRRTCRKLAALCLDKSLIHTV). LRR repeat units lie at residues 77-103 (DYQA…SMAG), 104-128 (CYWL…NLSG), 129-153 (CHLT…AIDV), 177-201 (KQTL…LLYF), 324-352 (CTLS…NLSG), 367-392 (EDDI…NLSA), 393-422 (AHHH…SLPV), 468-492 (CPQP…ELIG), 516-540 (AQSV…TLAQ), 542-567 (PSVL…SLAN), 572-597 (GKVV…RLEQ), and 599-623 (YFSA…CLVS).

As to quaternary structure, directly interacts with SKP1 and CUL1.

Its function is as follows. Substrate-recognition component of the SCF (SKP1-CUL1-F-box protein)-type E3 ubiquitin ligase complex. This Homo sapiens (Human) protein is F-box/LRR-repeat protein 18 (FBXL18).